The following is a 270-amino-acid chain: Putative phosphoenolpyruvate synthase regulatory protein (270 aa).

An ADP-binding site is contributed by Gly154–Thr161.

The protein belongs to the pyruvate, phosphate/water dikinase regulatory protein family. PSRP subfamily.

The enzyme catalyses [pyruvate, water dikinase] + ADP = [pyruvate, water dikinase]-phosphate + AMP + H(+). The catalysed reaction is [pyruvate, water dikinase]-phosphate + phosphate + H(+) = [pyruvate, water dikinase] + diphosphate. In terms of biological role, bifunctional serine/threonine kinase and phosphorylase involved in the regulation of the phosphoenolpyruvate synthase (PEPS) by catalyzing its phosphorylation/dephosphorylation. This is Putative phosphoenolpyruvate synthase regulatory protein from Deinococcus geothermalis (strain DSM 11300 / CIP 105573 / AG-3a).